The following is a 397-amino-acid chain: Ribosomal RNA large subunit methyltransferase I (397 aa).

The 81-residue stretch at 2-82 (TTSIYLVKGR…EVINVDFFVK (81 aa)) folds into the PUA domain.

It belongs to the methyltransferase superfamily. RlmI family.

It localises to the cytoplasm. It carries out the reaction cytidine(1962) in 23S rRNA + S-adenosyl-L-methionine = 5-methylcytidine(1962) in 23S rRNA + S-adenosyl-L-homocysteine + H(+). In terms of biological role, specifically methylates the cytosine at position 1962 (m5C1962) of 23S rRNA. In Photobacterium profundum (strain SS9), this protein is Ribosomal RNA large subunit methyltransferase I.